The chain runs to 261 residues: UPF0246 protein azo1887 (261 aa).

This sequence belongs to the UPF0246 family.

The sequence is that of UPF0246 protein azo1887 from Azoarcus sp. (strain BH72).